The following is a 147-amino-acid chain: Sec-independent protein translocase protein TatB (147 aa).

A helical membrane pass occupies residues 1-21; it reads MFDVSFTELMVIGVIALVVIG. The disordered stretch occupies residues 67–147; that stretch reads DETARSMQTS…DKTPPTGSAT (81 aa). Over residues 93–103 the composition is skewed to basic and acidic residues; the sequence is AELDDTARDAS. Low complexity-rich tracts occupy residues 109–120 and 129–147; these read ADAPAEPAPAVA and APPA…GSAT.

The protein belongs to the TatB family. The Tat system comprises two distinct complexes: a TatABC complex, containing multiple copies of TatA, TatB and TatC subunits, and a separate TatA complex, containing only TatA subunits. Substrates initially bind to the TatABC complex, which probably triggers association of the separate TatA complex to form the active translocon.

It is found in the cell inner membrane. Functionally, part of the twin-arginine translocation (Tat) system that transports large folded proteins containing a characteristic twin-arginine motif in their signal peptide across membranes. Together with TatC, TatB is part of a receptor directly interacting with Tat signal peptides. TatB may form an oligomeric binding site that transiently accommodates folded Tat precursor proteins before their translocation. This Bordetella pertussis (strain Tohama I / ATCC BAA-589 / NCTC 13251) protein is Sec-independent protein translocase protein TatB.